Here is an 883-residue protein sequence, read N- to C-terminus: HTH-type transcriptional regulator AlkS (883 aa).

Residues 816–881 enclose the HTH luxR-type domain; sequence ENKAGDFLTL…QAIIEAERQG (66 aa). The H-T-H motif DNA-binding region spans 840 to 859; it reads NKQIATKMYVTEDAIKWHMR.

The protein operates within hydrocarbon metabolism; alkane degradation. In terms of biological role, may act as a transcriptional regulator of AlkB. This chain is HTH-type transcriptional regulator AlkS (alkS), found in Pseudomonas putida (Arthrobacter siderocapsulatus).